Consider the following 454-residue polypeptide: Histidine--tRNA ligase (454 aa).

The protein belongs to the class-II aminoacyl-tRNA synthetase family. In terms of assembly, homodimer.

It localises to the cytoplasm. It carries out the reaction tRNA(His) + L-histidine + ATP = L-histidyl-tRNA(His) + AMP + diphosphate + H(+). The polypeptide is Histidine--tRNA ligase (Porphyromonas gingivalis (strain ATCC BAA-308 / W83)).